A 642-amino-acid polypeptide reads, in one-letter code: MRNDSPYTPLLNASHNNHRRRELLLLFSGLLLLASIIAFSAYIAQPHADADVSSSSSILSDEATRPTTLSRGVSSGVSEKSNTFLLSGNLVGEGGSFPWNNTMLSWQRTAFHFQPEKNWMNDPNGPLYYKGWYHFFYQYNPNGAVWGDIVWGHAVSRDLIHWLHLPLAMVADQWYDSNGVWTGSATILPDGQVIMLYTGSTNEFVQVQNLAYPADLNDPLLVDWIKYPSNPVLVPPPGILPKDFRDPTTAWLTTEGKWRITIGSKINKTGVALVYDTVDFKTYERKDMLLNAVPGTGMWECVDFFPVSMKSENGLDTSFTGDEVKHVMKVSLDDDRHDYYALGTYDEKKVKFIADDFENDVGIGLRYDYGIFYASKTFYDQKKDRRVLWGWIGESDSEYADVAKGWASVQSIPRIVKLDKKTGSNLLQWPVAEVESLRLRSDEFQNLKVKPGAVVSVDIETATQLDIVAEFEIDKEALEKTAQSNVEYECNTSGGASRRGALGPFGLYVLADNGLSEYTPVYFYVVKGINGKLHTSFCSDQSRSSLANDVHKQIYGSVVPVLEGEKLSLRILVDHSIVESFAQGGRTCITSRVYPTRAIYGAARLFLFNNAIETNVTASLKVWQMNSAFIRPYHPDQKRQTS.

Topologically, residues 1–22 (MRNDSPYTPLLNASHNNHRRRE) are cytoplasmic. A propeptide spans 1–95 (MRNDSPYTPL…LSGNLVGEGG (95 aa)) (removed in mature form). The helical; Signal-anchor for type II membrane protein transmembrane segment at 23–43 (LLLLFSGLLLLASIIAFSAYI) threads the bilayer. The Lumenal segment spans residues 44-642 (AQPHADADVS…YHPDQKRQTS (599 aa)). Asn-100 carries N-linked (GlcNAc...) asparagine glycosylation. Substrate contacts are provided by residues 119-122 (WMND), Gln-138, Trp-146, 181-182 (WT), and 245-246 (RD). Residue Asp-122 is part of the active site. Asn-267 carries N-linked (GlcNAc...) asparagine glycosylation. Residues Glu-300 and Asp-333 each coordinate substrate. A disulfide bond links Cys-490 and Cys-538. 2 N-linked (GlcNAc...) asparagine glycosylation sites follow: Asn-491 and Asn-615.

This sequence belongs to the glycosyl hydrolase 32 family. May be present in two forms, a 70 kDa monomer and a heterodimer of the 30 kDa and 38 kDa subunits. The ratio of the levels of the two forms within cells appears to be regulated developmentally.

Its subcellular location is the membrane. It localises to the vacuole. It is found in the vacuole lumen. It carries out the reaction Hydrolysis of terminal non-reducing beta-D-fructofuranoside residues in beta-D-fructofuranosides.. It functions in the pathway glycan biosynthesis; sucrose metabolism. The protein is Acid beta-fructofuranosidase (VCINV) of Vicia faba (Broad bean).